The following is a 154-amino-acid chain: Nuclear cap-binding protein subunit 2 (154 aa).

MRNA contacts are provided by residues Tyr-10, Tyr-33, 102-106, 113-117, and 123-124; these read RVDWD, RQYGR, and QV. An RRM domain is found at 30-108; sequence CTLYVGNLSF…RLIRVDWDAG (79 aa).

The protein belongs to the RRM NCBP2 family. Component of the nuclear cap-binding complex (CBC), a heterodimer composed of Cbp80 and Cbp20 that interacts with m7GpppG-capped RNA. Interacts with Ars2.

The protein resides in the nucleus. In terms of biological role, component of the cap-binding complex (CBC), which binds co-transcriptionally to the 5' cap of pre-mRNAs and is involved in various processes such as pre-mRNA splicing and RNA-mediated gene silencing (RNAi). The CBC complex is involved in miRNA-mediated RNA interference via its interaction with Ars2 and is required for primary microRNAs (miRNAs) processing. Also involved in innate immunity via the short interfering RNAs (siRNAs) processing machinery by restricting the viral RNA production. In the CBC complex, Cbp20 recognizes and binds capped RNAs (m7GpppG-capped RNA) but requires Cbp80 to stabilize the movement of its N-terminal loop and lock the CBC into a high affinity cap-binding state with the cap structure. The polypeptide is Nuclear cap-binding protein subunit 2 (Cbp20) (Drosophila persimilis (Fruit fly)).